Consider the following 94-residue polypeptide: Putative regulatory protein Tmel_0100 (94 aa).

Belongs to the RemA family.

This is Putative regulatory protein Tmel_0100 from Thermosipho melanesiensis (strain DSM 12029 / CIP 104789 / BI429).